Reading from the N-terminus, the 249-residue chain is Small ribosomal subunit protein uS2 (249 aa).

The protein belongs to the universal ribosomal protein uS2 family.

This Bordetella parapertussis (strain 12822 / ATCC BAA-587 / NCTC 13253) protein is Small ribosomal subunit protein uS2.